Reading from the N-terminus, the 37-residue chain is Large ribosomal subunit protein bL36 (37 aa).

Belongs to the bacterial ribosomal protein bL36 family.

In Solibacter usitatus (strain Ellin6076), this protein is Large ribosomal subunit protein bL36.